We begin with the raw amino-acid sequence, 515 residues long: Probable cytosol aminopeptidase (515 aa).

Residues K279 and D284 each contribute to the Mn(2+) site. The active site involves K291. The Mn(2+) site is built by D302, D361, and E363. The active site involves R365.

It belongs to the peptidase M17 family. Mn(2+) serves as cofactor.

The protein resides in the cytoplasm. The catalysed reaction is Release of an N-terminal amino acid, Xaa-|-Yaa-, in which Xaa is preferably Leu, but may be other amino acids including Pro although not Arg or Lys, and Yaa may be Pro. Amino acid amides and methyl esters are also readily hydrolyzed, but rates on arylamides are exceedingly low.. It carries out the reaction Release of an N-terminal amino acid, preferentially leucine, but not glutamic or aspartic acids.. In terms of biological role, presumably involved in the processing and regular turnover of intracellular proteins. Catalyzes the removal of unsubstituted N-terminal amino acids from various peptides. This chain is Probable cytosol aminopeptidase, found in Mycobacterium bovis (strain ATCC BAA-935 / AF2122/97).